The following is a 595-amino-acid chain: MGKKSRVKTQKSGTGATATVSPKEILNLTSELLQKCSSPAPGPGKEWEEYVQIRTLVEKIRKKQKGLSVTFDGKREDYFPDLMKWASENGASVEGFEMVNFKEEGFGLRATRDIKAEELFLWVPRKLLMTVESAKNSVLGPLYSQDRILQAMGNIALAFHLLCERANPNSFWQPYIQTLPSEYDTPLYFEEDEVRYLQSTQAIHDVFSQYKNTARQYAYFYKVIQTHPHANKLPLKDSFTYEDYRWAVSSVMTRQNQIPTEDGSRVTLALIPLWDMCNHTNGLITTGYNLEDDRCECVALQDFRAGEQIYIFYGTRSNAEFVIHSGFFFDNNSHDRVKIKLGVSKSDRLYAMKAEVLARAGIPTSSVFALHFTEPPISAQLLAFLRVFCMTEEELKEHLLGDSAIDRIFTLGNSEFPVSWDNEVKLWTFLEDRASLLLKTYKTTIEEDKSVLKNQDLSVRAKMAIKLRLGEKEILEKAVKSAAVNREFYRQQMEEKAPLPKYEEGNLGLLESSVGDSRLPLVLRNLEEEAGVQDALNIREAISKAQATENGLVNGENSVPNGTRSENENLNQEESKRAVEDAKGSSSDNTAEVKE.

Residues 1-22 (MGKKSRVKTQKSGTGATATVSP) form a disordered region. Residues 10–20 (QKSGTGATATV) are compositionally biased toward polar residues. S-adenosyl-L-methionine is bound by residues R75, 104-106 (EGF), R254, 275-279 (DMCNH), and 325-327 (SGF). Residues 94 to 314 (EGFEMVNFKE…AGEQIYIFYG (221 aa)) form the SET domain. S513 is modified (phosphoserine). The segment covering 549–572 (ENGLVNGENSVPNGTRSENENLNQ) has biased composition (polar residues). Positions 549–595 (ENGLVNGENSVPNGTRSENENLNQEESKRAVEDAKGSSSDNTAEVKE) are disordered. Positions 573-583 (EESKRAVEDAK) are enriched in basic and acidic residues. Residues 584-595 (GSSSDNTAEVKE) are compositionally biased toward polar residues.

The protein belongs to the class V-like SAM-binding methyltransferase superfamily. SETD3 actin-histidine methyltransferase family. As to quaternary structure, interacts with MYOD1. Post-translationally, phosphorylated by GSK3B, which is required for recognition by the SCF(FBXW7) complex and subsequent degradation. Ubiquitinated by the SCF(FBXW7) complex following phosphorylation by GSK3B, leading to its degradation by the proteasome.

Its subcellular location is the cytoplasm. It localises to the nucleus. It catalyses the reaction L-histidyl-[protein] + S-adenosyl-L-methionine = N(tele)-methyl-L-histidyl-[protein] + S-adenosyl-L-homocysteine + H(+). In terms of biological role, protein-histidine N-methyltransferase that specifically mediates 3-methylhistidine (tele-methylhistidine) methylation of actin at 'His-73'. Histidine methylation of actin is required for smooth muscle contraction of the laboring uterus during delivery. Does not have protein-lysine N-methyltransferase activity and probably only catalyzes histidine methylation of actin. This Papio anubis (Olive baboon) protein is Actin-histidine N-methyltransferase.